Reading from the N-terminus, the 70-residue chain is Conotoxin Lt3.4 (70 aa).

Residues Met1 to Ala24 form the signal peptide. Residues Asp25–Arg54 constitute a propeptide that is removed on maturation. At Gln55 the chain carries Pyrrolidone carboxylic acid. 3 cysteine pairs are disulfide-bonded: Cys56–Cys68, Cys57–Cys66, and Cys62–Cys69.

The protein belongs to the conotoxin M superfamily. Expressed by the venom duct.

Its subcellular location is the secreted. This Conus litteratus (Lettered cone) protein is Conotoxin Lt3.4.